The following is a 181-amino-acid chain: ATP-dependent protease subunit HslV (181 aa).

Residue Thr-7 is part of the active site. The Na(+) site is built by Ala-166, Cys-169, and Thr-172.

The protein belongs to the peptidase T1B family. HslV subfamily. As to quaternary structure, a double ring-shaped homohexamer of HslV is capped on each side by a ring-shaped HslU homohexamer. The assembly of the HslU/HslV complex is dependent on binding of ATP.

Its subcellular location is the cytoplasm. It catalyses the reaction ATP-dependent cleavage of peptide bonds with broad specificity.. With respect to regulation, allosterically activated by HslU binding. Functionally, protease subunit of a proteasome-like degradation complex believed to be a general protein degrading machinery. The chain is ATP-dependent protease subunit HslV from Anaeromyxobacter dehalogenans (strain 2CP-1 / ATCC BAA-258).